The chain runs to 195 residues: Cbp/p300-interacting transactivator 1 (195 aa).

2 disordered regions span residues 1–24 (MPTM…NANP) and 51–149 (ASNG…SPAI). Over residues 54–78 (GTKASGAPTSSSGSPSPISSSTATP) the composition is skewed to low complexity. Polar residues predominate over residues 97–106 (MQLQKLNSQY). Residues 137-148 (SLSPSAGAQSPA) show a composition bias toward low complexity. Positions 160 to 169 (LMSLVVELGL) match the Nuclear export signal motif.

This sequence belongs to the CITED family. Interacts (via C-terminus) with CREBBP. Interacts with EGR2. Homodimer. Binds to RBM14. Interacts (via N-terminus) with HSPA8; the interaction suppresses the association of CITED1 with p300/CBP and SMAD-mediated transcription transactivation. Interacts (via C-terminus) with TOX3 (via HGM box); the interaction increases estrogen-response element (ERE)-dependent transcription and protection against cell death. Interacts with ESR1; the interaction occurs in a estrogen-dependent manner. Interacts (unphosphorylated form preferentially and via C-terminus) with EP300. Post-translationally, phosphorylated. Phosphorylation changes in a cell cycle-dependent manner and reduces its transcriptional cofactor activity.

It localises to the nucleus. The protein localises to the cytoplasm. In terms of biological role, transcriptional coactivator of the p300/CBP-mediated transcription complex. Enhances SMAD-mediated transcription by strengthening the functional link between the DNA-binding SMAD transcription factors and the p300/CBP transcription coactivator complex. Stimulates estrogen-dependent transactivation activity mediated by estrogen receptors signaling; stabilizes the interaction of estrogen receptor ESR1 and histone acetyltransferase EP300. Positively regulates TGF-beta signaling through its association with the SMAD/p300/CBP-mediated transcriptional coactivator complex. Induces transcription from estrogen-responsive promoters and protection against cell death. Potentiates EGR2-mediated transcriptional activation activity from the ERBB2 promoter. Acts as an inhibitor of osteoblastic mineralization through a cAMP-dependent parathyroid hormone receptor signaling. May play a role in pigmentation of melanocytes. Associates with chromatin to the estrogen-responsive TGF-alpha promoter region in a estrogen-dependent manner. This is Cbp/p300-interacting transactivator 1 (CITED1) from Bos taurus (Bovine).